The following is a 225-amino-acid chain: Glutathione S-transferase-like protein tpcF (225 aa).

Residues 4-85 (IQPITVYGKG…YLVSHYDPDH (82 aa)) form the GST N-terminal domain. The 134-residue stretch at 92–225 (GSNLAALATQ…KGMADIFPST (134 aa)) folds into the GST C-terminal domain.

The protein belongs to the GST superfamily. As to expression, specifically expressed in conidia.

Its pathway is secondary metabolite biosynthesis. Functionally, glutathione S-transferase-like protein; part of the gene cluster that mediates the biosynthesis of trypacidin, a mycotoxin with antiprotozoal activity and that plays a role in the infection process. The pathway begins with the synthesis of atrochrysone thioester by the polyketide synthase (PKS) tpcC. The atrochrysone carboxyl ACP thioesterase tpcB then breaks the thioester bond and releases the atrochrysone carboxylic acid from tpcC. The decarboxylase tpcK converts atrochrysone carboxylic acid to atrochrysone which is further reduced into emodin anthrone. The next step is performed by the emodin anthrone oxygenase tpcL that catalyzes the oxidation of emodinanthrone to emodin. Emodin O-methyltransferase encoded by tpcA catalyzes methylation of the 8-hydroxy group of emodin to form questin. Ring cleavage of questin by questin oxidase tpcI leads to desmethylsulochrin via several intermediates including questin epoxide. Another methylation step catalyzed by tpcM leads to the formation of sulochrin which is further converted to monomethylsulfochrin by tpcH. Finally, the tpcJ catalyzes the conversion of monomethylsulfochrin to trypacidin. Trypacidin is toxic for human pulmonary and bronchial epithelial cells by initiating the intracellular formation of nitric oxide (NO) and hydrogen peroxide (H(2)O(2)), thus triggering host necrotic cell death. The trypacidin pathway is also able to produce endocrocin via a distinct route from the endocrocin Enc pathway. This Aspergillus fumigatus (strain ATCC MYA-4609 / CBS 101355 / FGSC A1100 / Af293) (Neosartorya fumigata) protein is Glutathione S-transferase-like protein tpcF.